The following is a 528-amino-acid chain: Equilibrative nucleoside transporter 4 (528 aa).

The Extracellular segment spans residues methionine 1–histidine 68. The chain crosses the membrane as a helical span at residues alanine 69–isoleucine 89. The Cytoplasmic segment spans residues threonine 90–glycine 101. A helical transmembrane segment spans residues threonine 102–leucine 122. Over asparagine 123–glycine 139 the chain is Extracellular. Residues tyrosine 140–phenylalanine 160 traverse the membrane as a helical segment. Residues serine 161–tyrosine 166 lie on the Cytoplasmic side of the membrane. The helical transmembrane segment at alanine 167–phenylalanine 187 threads the bilayer. At tyrosine 188–threonine 231 the chain is on the extracellular side. Residues isoleucine 232–valine 252 form a helical membrane-spanning segment. At arginine 253–arginine 346 the chain is on the cytoplasmic side. A helical membrane pass occupies residues valine 347–proline 367. The Extracellular segment spans residues glycine 368–cysteine 376. The helical transmembrane segment at valine 377–glycine 397 threads the bilayer. Topologically, residues lysine 398 to histidine 411 are cytoplasmic. A helical membrane pass occupies residues leucine 412–proline 432. Residues serine 433–cysteine 445 are Extracellular-facing. Residues valine 446–alanine 466 form a helical membrane-spanning segment. At alanine 467 to threonine 481 the chain is on the cytoplasmic side. The chain crosses the membrane as a helical span at residues methionine 482–threonine 504. The Extracellular portion of the chain corresponds to arginine 505–proline 528. The N-linked (GlcNAc...) asparagine glycan is linked to asparagine 521.

This sequence belongs to the SLC29A/ENT transporter (TC 2.A.57) family. Post-translationally, N-glycosylated. In terms of tissue distribution, expressed in heart. Expressed in choroid plexus.

It localises to the cell membrane. It is found in the apical cell membrane. The catalysed reaction is serotonin(out) = serotonin(in). The enzyme catalyses dopamine(out) = dopamine(in). It catalyses the reaction (R)-noradrenaline(out) = (R)-noradrenaline(in). It carries out the reaction (R)-adrenaline(out) = (R)-adrenaline(in). The catalysed reaction is histamine(out) = histamine(in). The enzyme catalyses tyramine(in) = tyramine(out). It catalyses the reaction guanidine(out) = guanidine(in). It carries out the reaction adenine(out) = adenine(in). The catalysed reaction is adenosine(in) = adenosine(out). Its activity is regulated as follows. Activated at acidic pH. Its function is as follows. Electrogenic voltage-dependent transporter that mediates the transport of a variety of endogenous bioactive amines, cationic xenobiotics and drugs. Utilizes the physiologic inside-negative membrane potential as a driving force to facilitate cellular uptake of organic cations. Functions as a Na(+)- and Cl(-)-independent bidirectional transporter. Substrate transport is pH-dependent and enhanced under acidic condition, which is most likely the result of allosteric changes in the transporter structure. Implicated in monoamine neurotransmitters uptake such as serotonin, dopamine, adrenaline/epinephrine, noradrenaline/norepinephrine, histamine and tyramine, thereby supporting a role in homeostatic regulation of aminergic neurotransmission in the central nervous system. Also responsible for the uptake of bioactive amines and drugs through the blood-cerebrospinal fluid (CSF) barrier, from the CSF into choroid plexus epithelial cells, thereby playing a significant role in the clearance of cationic neurotoxins, xenobiotics and metabolic waste in the brain. Involved in bidirectional transport of the purine nucleoside adenosine and plays a role in the regulation of extracellular adenosine concentrations in cardiac tissues, in particular during ischemia. May be involved in organic cation uptake from the tubular lumen into renal tubular cells, thereby contributing to organic cation reabsorption in the kidney. Also transports adenine and guanidine. The protein is Equilibrative nucleoside transporter 4 of Mus musculus (Mouse).